A 1051-amino-acid chain; its full sequence is Outer capsid protein VP2 (1051 aa).

This sequence belongs to the orbivirus VP2 family.

The protein localises to the virion. The VP2 protein is one of the two proteins (with VP5) which constitute the virus particle outer capsid. It is the major target of the host immunogenic response. The protein is Outer capsid protein VP2 (Segment-2) of African horse sickness virus (AHSV).